A 551-amino-acid chain; its full sequence is Hydroxylamine reductase (551 aa).

[2Fe-2S] cluster contacts are provided by Cys3, Cys6, Cys18, and Cys25. Residues His249, Glu273, Cys317, Cys405, Cys433, Cys459, Glu493, and Lys495 each contribute to the hybrid [4Fe-2O-2S] cluster site. Cysteine persulfide is present on Cys405.

It belongs to the HCP family. It depends on [2Fe-2S] cluster as a cofactor. The cofactor is hybrid [4Fe-2O-2S] cluster.

It is found in the cytoplasm. The catalysed reaction is A + NH4(+) + H2O = hydroxylamine + AH2 + H(+). Its function is as follows. Catalyzes the reduction of hydroxylamine to form NH(3) and H(2)O. The sequence is that of Hydroxylamine reductase from Actinobacillus pleuropneumoniae serotype 7 (strain AP76).